A 63-amino-acid chain; its full sequence is Cecropin-C (63 aa).

A signal peptide spans 1-23 (MNFNKIFVFVALILAISLGQSEA). Residue arginine 62 is modified to Arginine amide.

Belongs to the cecropin family.

The protein resides in the secreted. Cecropins have lytic and antibacterial activity against several Gram-positive and Gram-negative bacteria. This is Cecropin-C (CecC) from Drosophila orena (Fruit fly).